A 60-amino-acid polypeptide reads, in one-letter code: Large ribosomal subunit protein bL32 (60 aa).

A disordered region spans residues 1–60 (MAVQQNKKSRSARDMRRSHDALSENALSVEKTTGEVHLRHHVSPEGVYRGRKVVDKGADE). Residues 11–22 (SARDMRRSHDAL) show a composition bias toward basic and acidic residues.

Belongs to the bacterial ribosomal protein bL32 family.

The chain is Large ribosomal subunit protein bL32 from Pseudomonas putida (strain ATCC 700007 / DSM 6899 / JCM 31910 / BCRC 17059 / LMG 24140 / F1).